The following is a 306-amino-acid chain: Dihydroorotate dehydrogenase B (NAD(+)), catalytic subunit (306 aa).

FMN is bound by residues serine 24 and lysine 48 to alanine 49. Substrate contacts are provided by residues lysine 48 and asparagine 72–leucine 76. FMN contacts are provided by asparagine 102 and asparagine 130. Asparagine 130 lines the substrate pocket. The active-site Nucleophile is cysteine 133. The FMN site is built by lysine 168 and isoleucine 194. Asparagine 195–threonine 196 contacts substrate. FMN-binding positions include glycine 220, glycine 246–glycine 247, and glycine 268–threonine 269.

The protein belongs to the dihydroorotate dehydrogenase family. Type 1 subfamily. Heterotetramer of 2 PyrK and 2 PyrD type B subunits. It depends on FMN as a cofactor.

It localises to the cytoplasm. The enzyme catalyses (S)-dihydroorotate + NAD(+) = orotate + NADH + H(+). The protein operates within pyrimidine metabolism; UMP biosynthesis via de novo pathway; orotate from (S)-dihydroorotate (NAD(+) route): step 1/1. Its function is as follows. Catalyzes the conversion of dihydroorotate to orotate with NAD(+) as electron acceptor. This Malacoplasma penetrans (strain HF-2) (Mycoplasma penetrans) protein is Dihydroorotate dehydrogenase B (NAD(+)), catalytic subunit (pyrD).